A 362-amino-acid polypeptide reads, in one-letter code: Innexin-17 (362 aa).

4 helical membrane-spanning segments follow: residues 27 to 47 (YFTVFLLTSSAFFIMAKQYVG), 101 to 121 (WVPFILFGLAVVIYIPRVIWN), 189 to 209 (FLATILIFISMGFLDYFMGLG), and 266 to 286 (LFIALWWWYALLAILSIFDIF).

This sequence belongs to the pannexin family.

Its subcellular location is the cell membrane. The protein resides in the cell junction. The protein localises to the gap junction. Structural component of the gap junctions. The polypeptide is Innexin-17 (Caenorhabditis elegans).